The primary structure comprises 226 residues: MALSDADVQKQIKHMMAFIEQEANEKAEEIDAKAEEEFNIEKGRLVQQQRLKIMEYYEKKEKQVELQKKIQSSNMLNQARLKVLKVREDHVRNVLDEARKRLAEVPKDIKLYSDLLVTLIVQALFQLVEPTVTLRVRQADKALVESLLGRAQQDYKAKIKKDVVLKIDNENFLPPDTCGGIELIAAKGRIKISNTLESRLELIAQQLLPEIRNALFGRNPNRKFTD.

This sequence belongs to the V-ATPase E subunit family. In terms of assembly, V-ATPase is a heteromultimeric enzyme made up of two complexes: the ATP-hydrolytic V1 complex and the proton translocation V0 complex. The V1 complex consists of three catalytic AB heterodimers that form a heterohexamer, three peripheral stalks each consisting of EG heterodimers, one central rotor including subunits D and F, and the regulatory subunits C and H. The proton translocation complex V0 consists of the proton transport subunit a, a ring of proteolipid subunits c9c'', rotary subunit d, subunits e and f, and the accessory subunits VhaAC45 and ATP6AP2.

Functionally, subunit of the V1 complex of vacuolar(H+)-ATPase (V-ATPase), a multisubunit enzyme composed of a peripheral complex (V1) that hydrolyzes ATP and a membrane integral complex (V0) that translocates protons. V-ATPase is responsible for acidifying and maintaining the pH of intracellular compartments and in some cell types, is targeted to the plasma membrane, where it is responsible for acidifying the extracellular environment. The protein is V-type proton ATPase subunit E (VHA26) of Manduca sexta (Tobacco hawkmoth).